The primary structure comprises 128 residues: Large ribosomal subunit protein uL22 (128 aa).

It belongs to the universal ribosomal protein uL22 family. In terms of assembly, part of the 50S ribosomal subunit.

This protein binds specifically to 23S rRNA; its binding is stimulated by other ribosomal proteins, e.g. L4, L17, and L20. It is important during the early stages of 50S assembly. It makes multiple contacts with different domains of the 23S rRNA in the assembled 50S subunit and ribosome. Functionally, the globular domain of the protein is located near the polypeptide exit tunnel on the outside of the subunit, while an extended beta-hairpin is found that lines the wall of the exit tunnel in the center of the 70S ribosome. The polypeptide is Large ribosomal subunit protein uL22 (Prochlorococcus marinus (strain MIT 9301)).